A 146-amino-acid polypeptide reads, in one-letter code: Large ribosomal subunit protein uL16 (146 aa).

The protein belongs to the universal ribosomal protein uL16 family. As to quaternary structure, part of the 50S ribosomal subunit.

Its function is as follows. Binds 23S rRNA and is also seen to make contacts with the A and possibly P site tRNAs. The chain is Large ribosomal subunit protein uL16 from Lactobacillus acidophilus (strain ATCC 700396 / NCK56 / N2 / NCFM).